The chain runs to 25 residues: Caerin-2.3 (25 aa).

Expressed by the skin parotoid and/or rostral glands.

Its subcellular location is the secreted. In terms of biological role, acts as a male sex pheromone that attracts females. Has no antimicrobial activity. The sequence is that of Caerin-2.3 from Ranoidea caerulea (Green tree frog).